The following is a 449-amino-acid chain: NADH-quinone oxidoreductase subunit H (449 aa).

Helical transmembrane passes span isoleucine 29–valine 49, proline 96–isoleucine 116, leucine 136–leucine 156, isoleucine 177–threonine 197, tryptophan 211–asparagine 231, phenylalanine 259–phenylalanine 279, tryptophan 298–leucine 318, phenylalanine 330–alanine 350, and tryptophan 365–glycine 385. The segment covering leucine 393–alanine 402 has biased composition (basic and acidic residues). The segment at leucine 393 to arginine 449 is disordered. A compositionally biased stretch (low complexity) spans alanine 418–serine 436.

This sequence belongs to the complex I subunit 1 family. As to quaternary structure, NDH-1 is composed of 14 different subunits. Subunits NuoA, H, J, K, L, M, N constitute the membrane sector of the complex.

The protein resides in the cell membrane. The enzyme catalyses a quinone + NADH + 5 H(+)(in) = a quinol + NAD(+) + 4 H(+)(out). Its function is as follows. NDH-1 shuttles electrons from NADH, via FMN and iron-sulfur (Fe-S) centers, to quinones in the respiratory chain. The immediate electron acceptor for the enzyme in this species is believed to be ubiquinone. Couples the redox reaction to proton translocation (for every two electrons transferred, four hydrogen ions are translocated across the cytoplasmic membrane), and thus conserves the redox energy in a proton gradient. This subunit may bind ubiquinone. This is NADH-quinone oxidoreductase subunit H from Frankia casuarinae (strain DSM 45818 / CECT 9043 / HFP020203 / CcI3).